The chain runs to 530 residues: Bifunctional purine biosynthesis protein PurH (530 aa).

Residues methionine 1–valine 148 enclose the MGS-like domain.

The protein belongs to the PurH family.

The catalysed reaction is (6R)-10-formyltetrahydrofolate + 5-amino-1-(5-phospho-beta-D-ribosyl)imidazole-4-carboxamide = 5-formamido-1-(5-phospho-D-ribosyl)imidazole-4-carboxamide + (6S)-5,6,7,8-tetrahydrofolate. It carries out the reaction IMP + H2O = 5-formamido-1-(5-phospho-D-ribosyl)imidazole-4-carboxamide. It participates in purine metabolism; IMP biosynthesis via de novo pathway; 5-formamido-1-(5-phospho-D-ribosyl)imidazole-4-carboxamide from 5-amino-1-(5-phospho-D-ribosyl)imidazole-4-carboxamide (10-formyl THF route): step 1/1. It functions in the pathway purine metabolism; IMP biosynthesis via de novo pathway; IMP from 5-formamido-1-(5-phospho-D-ribosyl)imidazole-4-carboxamide: step 1/1. The chain is Bifunctional purine biosynthesis protein PurH from Aliivibrio fischeri (strain MJ11) (Vibrio fischeri).